Consider the following 510-residue polypeptide: NKAP family protein (510 aa).

Positions 1 to 22 are enriched in basic and acidic residues; that stretch reads MSHRERDRDRDRDSDRDRDRNR. Disordered regions lie at residues 1-128, 149-220, and 239-401; these read MSHR…VEIQ, ERKD…NYNG, and VYER…PISE. Positions 23–39 are enriched in basic residues; that stretch reads YSRSRSRGSRSRSRSRS. Residues 40-89 are compositionally biased toward basic and acidic residues; the sequence is RSRDRNRNRDYNKDRSSNRDSYYNDRDYKKDRSSNRDRDYYDRDRNRDYK. Gly residues predominate over residues 96 to 105; it reads SSGGGGGGSG. Low complexity-rich tracts occupy residues 112 to 123 and 184 to 219; these read SSSYRESNSNNS and NNNN…SNYN. A compositionally biased stretch (basic residues) spans 262 to 273; it reads NKKKSKKSRRKS. The segment covering 274 to 283 has biased composition (low complexity); it reads SSNSDSSSSD. The span at 292 to 322 shows a compositional bias: basic residues; sequence REKRKKSKSRKDKKKRKEKKKHQRKSSKRSS. A compositionally biased stretch (basic and acidic residues) spans 342 to 351; it reads DSDRSDSEGR. Residues 352-367 are compositionally biased toward basic residues; sequence SRKKRSKKRSKKRHDH. The span at 368–383 shows a compositional bias: basic and acidic residues; sequence HKESVHDASMWEEKVE.

It belongs to the NKAP family.

The chain is NKAP family protein from Dictyostelium discoideum (Social amoeba).